Here is a 716-residue protein sequence, read N- to C-terminus: Amino-acid acetyltransferase, mitochondrial (716 aa).

The N-terminal 44 residues, 1–44 (MSLHTGWPRTVNSSFLKKHRSSLCTCQHTSSVLPRSFSTTPDRH), are a transit peptide targeting the mitochondrion. Over residues 37-56 (FSTTPDRHVQQSADFSSTSR) the composition is skewed to polar residues. Disordered stretches follow at residues 37–58 (FSTT…SRSY) and 96–121 (KAQH…TLPS). Residues 101–112 (KSPDANKPEPEK) are compositionally biased toward basic and acidic residues. The region spanning 537–706 (SRPRLKLDDP…YEAVCRSIQP (170 aa)) is the N-acetyltransferase domain.

The protein belongs to the acetyltransferase family.

It is found in the mitochondrion. It catalyses the reaction L-glutamate + acetyl-CoA = N-acetyl-L-glutamate + CoA + H(+). It functions in the pathway amino-acid biosynthesis; L-arginine biosynthesis; N(2)-acetyl-L-ornithine from L-glutamate: step 1/4. Functionally, N-acetylglutamate synthase involved in arginine biosynthesis. In Aspergillus fumigatus (strain CBS 144.89 / FGSC A1163 / CEA10) (Neosartorya fumigata), this protein is Amino-acid acetyltransferase, mitochondrial (arg2).